We begin with the raw amino-acid sequence, 502 residues long: Arginine-specific demethylase JMJ22 (502 aa).

The disordered stretch occupies residues 15–45 (KSKSKRLKLHQHEPESLFPEKEVEEEDEDEG). Residues 24–35 (HQHEPESLFPEK) are compositionally biased toward basic and acidic residues. Positions 80–126 (LGNLQILSDELVLDILGLLGANHLGVLATVTKSFYIFANHEPLWRNL) constitute an F-box domain. The 161-residue stretch at 279–439 (EKVPVLDSEY…NVLEFLKKPN (161 aa)) folds into the JmjC domain. Fe cation is bound by residues histidine 324, aspartate 326, and histidine 407.

Belongs to the JARID1 histone demethylase family. Requires Fe(2+) as cofactor. Expressed in inflorescences, roots and siliques, and, at low levels, in leaves and stems.

It localises to the nucleus. It catalyses the reaction N(omega),N(omega)-dimethyl-L-arginyl-[protein] + 2-oxoglutarate + O2 = N(omega)-methyl-L-arginyl-[protein] + formaldehyde + succinate + CO2. Its function is as follows. Histone demethylase that demethylates 'Arg-3' (H4R3me) of histone H4 with a specific activity for H4R3me2. Involved in the positive regulation of gene expression. Together with JMJ20, positively regulates seed germination by promoting the removal of repressive histone arginine methylations (e.g. H4R3me2) at GA3ox1 and GA3ox2 to trigger gibberellic acid (GA) biosynthesis. In Arabidopsis thaliana (Mouse-ear cress), this protein is Arginine-specific demethylase JMJ22.